Here is a 250-residue protein sequence, read N- to C-terminus: 2,3-bisphosphoglycerate-dependent phosphoglycerate mutase (250 aa).

Substrate is bound by residues 8–15, 21–22, Arg60, 87–90, Lys98, 114–115, and 183–184; these read RHGESQWN, TG, ERHY, RR, and GN. The active-site Tele-phosphohistidine intermediate is the His9. The Proton donor/acceptor role is filled by Glu87.

It belongs to the phosphoglycerate mutase family. BPG-dependent PGAM subfamily. As to quaternary structure, homodimer.

It carries out the reaction (2R)-2-phosphoglycerate = (2R)-3-phosphoglycerate. Its pathway is carbohydrate degradation; glycolysis; pyruvate from D-glyceraldehyde 3-phosphate: step 3/5. Functionally, catalyzes the interconversion of 2-phosphoglycerate and 3-phosphoglycerate. The protein is 2,3-bisphosphoglycerate-dependent phosphoglycerate mutase of Bordetella petrii (strain ATCC BAA-461 / DSM 12804 / CCUG 43448).